A 324-amino-acid chain; its full sequence is Myb-like DNA-binding protein myb-1 (324 aa).

HTH myb-type domains lie at 4–59 (MPDQ…KPGL) and 60–110 (NHGP…NRKK). The disordered stretch occupies residues 107-231 (NRKKNQLRRQ…PTGSTLRLLT (125 aa)). The segment covering 155 to 165 (RRPSSPSSFND) has biased composition (polar residues). Residues 166–175 (SLHHRVHESI) show a composition bias toward basic and acidic residues. Low complexity-rich tracts occupy residues 183-192 (QQQQQQQQQQ) and 222-231 (PTGSTLRLLT).

The protein localises to the nucleus. This is Myb-like DNA-binding protein myb-1 (rca-1) from Neurospora crassa (strain ATCC 24698 / 74-OR23-1A / CBS 708.71 / DSM 1257 / FGSC 987).